We begin with the raw amino-acid sequence, 496 residues long: Acetyl-coenzyme A carboxylase carboxyl transferase subunit beta, chloroplastic (496 aa).

A CoA carboxyltransferase N-terminal domain is found at 229–496 (LWVQCENCYG…FFPLNKNFIK (268 aa)). Positions 233, 236, 252, and 255 each coordinate Zn(2+). The C4-type zinc-finger motif lies at 233-255 (CENCYGLNYKKFFRLKLHICEQC).

This sequence belongs to the AccD/PCCB family. Acetyl-CoA carboxylase is a heterohexamer composed of biotin carboxyl carrier protein, biotin carboxylase and 2 subunits each of ACCase subunit alpha and ACCase plastid-coded subunit beta (accD). Requires Zn(2+) as cofactor.

It is found in the plastid. The protein localises to the chloroplast stroma. It carries out the reaction N(6)-carboxybiotinyl-L-lysyl-[protein] + acetyl-CoA = N(6)-biotinyl-L-lysyl-[protein] + malonyl-CoA. Its pathway is lipid metabolism; malonyl-CoA biosynthesis; malonyl-CoA from acetyl-CoA: step 1/1. Component of the acetyl coenzyme A carboxylase (ACC) complex. Biotin carboxylase (BC) catalyzes the carboxylation of biotin on its carrier protein (BCCP) and then the CO(2) group is transferred by the transcarboxylase to acetyl-CoA to form malonyl-CoA. The protein is Acetyl-coenzyme A carboxylase carboxyl transferase subunit beta, chloroplastic of Ranunculus macranthus (Large buttercup).